The following is a 688-amino-acid chain: Glycine--tRNA ligase beta subunit (688 aa).

This sequence belongs to the class-II aminoacyl-tRNA synthetase family. Tetramer of two alpha and two beta subunits.

It is found in the cytoplasm. The catalysed reaction is tRNA(Gly) + glycine + ATP = glycyl-tRNA(Gly) + AMP + diphosphate. This chain is Glycine--tRNA ligase beta subunit, found in Aliivibrio fischeri (strain ATCC 700601 / ES114) (Vibrio fischeri).